Here is a 433-residue protein sequence, read N- to C-terminus: Alpha-(1,3)-fucosyltransferase fut-1 (433 aa).

Residues 1–12 (MTARSIKLFFAR) lie on the Cytoplasmic side of the membrane. A helical; Signal-anchor for type II membrane protein membrane pass occupies residues 13-32 (WKYLMFACCITYLLVIYAPI). Residues 33–433 (SKSEQKDWKE…GTLVDSIPLD (401 aa)) are Lumenal-facing. N-linked (GlcNAc...) asparagine glycans are attached at residues asparagine 194 and asparagine 359.

The protein belongs to the glycosyltransferase 10 family. Mg(2+) serves as cofactor. The cofactor is Mn(2+). N-glycosylated. Glycosylation is important for enzymatic activity. As to expression, expressed in the pharyngeal-intestinal (PI) and anal valves. Expressed in ASG neurons and in one or two neurons in the retrovesicular ganglion and two neurons posterior to the PI valve and PHA and PHB neurons in the tail.

The protein resides in the golgi apparatus. The protein localises to the golgi stack membrane. It carries out the reaction N(4)-{beta-D-GlcNAc-(1-&gt;2)-alpha-D-Man-(1-&gt;3)-[beta-D-GlcNAc-(1-&gt;2)-alpha-D-Man-(1-&gt;6)]-beta-D-Man-(1-&gt;4)-beta-D-GlcNAc-(1-&gt;4)-beta-D-GlcNAc}-L-asparaginyl-[protein] + GDP-beta-L-fucose = N(4)-{beta-D-GlcNAc-(1-&gt;2)-alpha-D-Man-(1-&gt;3)-[beta-D-GlcNAc-(1-&gt;2)-alpha-D-Man-(1-&gt;6)]-beta-D-Man-(1-&gt;4)-beta-D-GlcNAc-(1-&gt;4)-[alpha-L-Fuc(1-&gt;3)]-beta-D-GlcNAc}-L-asparaginyl-[protein] + GDP + H(+). It functions in the pathway protein modification; protein glycosylation. With respect to regulation, inhibited by Cu(2+) or Zn(2+) and to a lesser extent Ni(2+) ions. Preferentially catalyzes the addition of fucose in alpha 1-3 linkage to the first GlcNAc residue (with or without alpha 1,6-linked fucose), next to the peptide chains in N-glycans. Unlike in mammals, does not require the prior action of N-acetylglucosaminyltransferase I to generate complex N-glycans. The sequence is that of Alpha-(1,3)-fucosyltransferase fut-1 from Caenorhabditis elegans.